Reading from the N-terminus, the 147-residue chain is Protein AfaD (147 aa).

Residues 1–26 form the signal peptide; sequence MNGSIRKMMRVTCGMLLMVMSGVSQA. Positions 91–111 are disordered; it reads RTGGDGWSPVKGEGGKGVSRP.

This sequence to E.coli AggB.

The polypeptide is Protein AfaD (afaD) (Escherichia coli).